The following is a 162-amino-acid chain: NADH-quinone oxidoreductase subunit I (162 aa).

4Fe-4S ferredoxin-type domains follow at residues 52–82 and 93–122; these read LRRY…IEAG and VRYD…EGPN. Residues Cys-62, Cys-65, Cys-68, Cys-72, Cys-102, Cys-105, Cys-108, and Cys-112 each contribute to the [4Fe-4S] cluster site.

This sequence belongs to the complex I 23 kDa subunit family. As to quaternary structure, NDH-1 is composed of 14 different subunits. Subunits NuoA, H, J, K, L, M, N constitute the membrane sector of the complex. The cofactor is [4Fe-4S] cluster.

It is found in the cell inner membrane. It catalyses the reaction a quinone + NADH + 5 H(+)(in) = a quinol + NAD(+) + 4 H(+)(out). Functionally, NDH-1 shuttles electrons from NADH, via FMN and iron-sulfur (Fe-S) centers, to quinones in the respiratory chain. The immediate electron acceptor for the enzyme in this species is believed to be ubiquinone. Couples the redox reaction to proton translocation (for every two electrons transferred, four hydrogen ions are translocated across the cytoplasmic membrane), and thus conserves the redox energy in a proton gradient. This is NADH-quinone oxidoreductase subunit I from Nitrobacter hamburgensis (strain DSM 10229 / NCIMB 13809 / X14).